The chain runs to 323 residues: Digestive cysteine proteinase 2 (323 aa).

Positions 1 to 16 (MKVAVLFLCGVALAAA) are cleaved as a signal peptide. Residues 17–107 (SPSWEHFKGK…FYPKKETGPQ (91 aa)) constitute a propeptide, activation peptide. 3 disulfides stabilise this stretch: C128/C171, C162/C204, and C263/C312. C131 is an active-site residue. Active-site residues include H270 and N290.

It belongs to the peptidase C1 family.

With respect to regulation, inhibited by E-64, antipain, leupeptin, heavy metal ions, iodoacetic acid, dithionitrobenzene, p-hydroxymercuri-benzoate; activated by mercaptoethanol and dithiothreitol. The protein is Digestive cysteine proteinase 2 (LCP2) of Homarus americanus (American lobster).